A 585-amino-acid polypeptide reads, in one-letter code: Arginine--tRNA ligase (585 aa).

A 'HIGH' region motif is present at residues 127–137 (PNTNKPLHVGH).

It belongs to the class-I aminoacyl-tRNA synthetase family. As to quaternary structure, monomer.

The protein localises to the cytoplasm. It carries out the reaction tRNA(Arg) + L-arginine + ATP = L-arginyl-tRNA(Arg) + AMP + diphosphate. In Borreliella burgdorferi (strain ATCC 35210 / DSM 4680 / CIP 102532 / B31) (Borrelia burgdorferi), this protein is Arginine--tRNA ligase (argS).